The chain runs to 430 residues: Zinc finger CCCH domain-containing protein 48 (430 aa).

2 disordered regions span residues 1–27 (MDLD…TTDS) and 56–90 (GSGP…GTAN). The segment at 26–52 (DSNQKVCFHWRAGRCNRYPCPYLHREL) adopts a C3H1-type 1 zinc-finger fold. The segment at 102-129 (TKTEKLCKFWVDGNCPYGDKCRYLHCWS) adopts a C3H1-type 2 zinc-finger fold. WD repeat units lie at residues 142-183 (GHQK…GVLN), 221-258 (GPVG…SCFD), 265-304 (GHTL…QTLT), 306-342 (HTSV…NLEV), 345-389 (THKE…ERGK), and 391-429 (LAKQ…TPIL).

The chain is Zinc finger CCCH domain-containing protein 48 (ZFWD1) from Arabidopsis thaliana (Mouse-ear cress).